A 272-amino-acid chain; its full sequence is 3-methyl-2-oxobutanoate hydroxymethyltransferase (272 aa).

Positions 43 and 82 each coordinate Mg(2+). 3-methyl-2-oxobutanoate contacts are provided by residues 43 to 44 (DS), Asp82, and Lys112. Glu114 is a Mg(2+) binding site. Glu179 (proton acceptor) is an active-site residue.

The protein belongs to the PanB family. Homodecamer; pentamer of dimers. Mg(2+) is required as a cofactor.

It is found in the cytoplasm. The enzyme catalyses 3-methyl-2-oxobutanoate + (6R)-5,10-methylene-5,6,7,8-tetrahydrofolate + H2O = 2-dehydropantoate + (6S)-5,6,7,8-tetrahydrofolate. The protein operates within cofactor biosynthesis; (R)-pantothenate biosynthesis; (R)-pantoate from 3-methyl-2-oxobutanoate: step 1/2. Functionally, catalyzes the reversible reaction in which hydroxymethyl group from 5,10-methylenetetrahydrofolate is transferred onto alpha-ketoisovalerate to form ketopantoate. This Staphylococcus aureus (strain Newman) protein is 3-methyl-2-oxobutanoate hydroxymethyltransferase.